The sequence spans 657 residues: Glycogen debranching enzyme (657 aa).

Asp336 functions as the Nucleophile in the catalytic mechanism. Residue Glu371 is the Proton donor of the active site. Positions 458-467 are enriched in basic and acidic residues; the sequence is NEANGEENRD. The segment at 458 to 479 is disordered; the sequence is NEANGEENRDGTNNNYSNNHGK.

This sequence belongs to the glycosyl hydrolase 13 family.

The catalysed reaction is Hydrolysis of (1-&gt;6)-alpha-D-glucosidic linkages to branches with degrees of polymerization of three or four glucose residues in limit dextrin.. The protein operates within glycan degradation; glycogen degradation. Removes maltotriose and maltotetraose chains that are attached by 1,6-alpha-linkage to the limit dextrin main chain, generating a debranched limit dextrin. The protein is Glycogen debranching enzyme of Escherichia coli O8 (strain IAI1).